Consider the following 606-residue polypeptide: Pescadillo homolog (606 aa).

The BRCT domain occupies 346 to 447 (LSTSLFSPYT…KILLEGPYGQ (102 aa)). The segment at 461–497 (YEGAYDPAAGPLGPSGVEQESESEADEVSEEDEEDQG) is disordered. A compositionally biased stretch (acidic residues) spans 479-496 (QESESEADEVSEEDEEDQ).

It belongs to the pescadillo family. Component of the NOP7 complex, composed of ERB1, NOP7 and YTM1. The complex is held together by ERB1, which interacts with NOP7 via its N-terminal domain and with YTM1 via a high-affinity interaction between the seven-bladed beta-propeller domains of the 2 proteins. The NOP7 complex associates with the 66S pre-ribosome.

The protein resides in the nucleus. It localises to the nucleolus. The protein localises to the nucleoplasm. In terms of biological role, component of the NOP7 complex, which is required for maturation of the 25S and 5.8S ribosomal RNAs and formation of the 60S ribosome. This chain is Pescadillo homolog, found in Laccaria bicolor (strain S238N-H82 / ATCC MYA-4686) (Bicoloured deceiver).